A 675-amino-acid polypeptide reads, in one-letter code: DNA gyrase subunit B (675 aa).

A Toprim domain is found at 453–567 (SELYVVEGDS…NGHVFLAQPP (115 aa)). Mg(2+) is bound by residues Glu-459, Asp-532, and Asp-534.

This sequence belongs to the type II topoisomerase GyrB family. In terms of assembly, heterotetramer, composed of two GyrA and two GyrB chains. In the heterotetramer, GyrA contains the active site tyrosine that forms a transient covalent intermediate with DNA, while GyrB binds cofactors and catalyzes ATP hydrolysis. Mg(2+) is required as a cofactor. Requires Mn(2+) as cofactor. The cofactor is Ca(2+).

It localises to the cytoplasm. It carries out the reaction ATP-dependent breakage, passage and rejoining of double-stranded DNA.. A type II topoisomerase that negatively supercoils closed circular double-stranded (ds) DNA in an ATP-dependent manner to modulate DNA topology and maintain chromosomes in an underwound state. Negative supercoiling favors strand separation, and DNA replication, transcription, recombination and repair, all of which involve strand separation. Also able to catalyze the interconversion of other topological isomers of dsDNA rings, including catenanes and knotted rings. Type II topoisomerases break and join 2 DNA strands simultaneously in an ATP-dependent manner. The protein is DNA gyrase subunit B of Mycobacterium tuberculosis (strain ATCC 25177 / H37Ra).